The following is a 136-amino-acid chain: Large ribosomal subunit protein uL16 (136 aa).

It belongs to the universal ribosomal protein uL16 family. Part of the 50S ribosomal subunit.

Its function is as follows. Binds 23S rRNA and is also seen to make contacts with the A and possibly P site tRNAs. This chain is Large ribosomal subunit protein uL16, found in Edwardsiella ictaluri (strain 93-146).